The sequence spans 160 residues: Transmembrane protein 220 (160 aa).

A run of 5 helical transmembrane segments spans residues P3–V23, A30–N50, I62–L82, G100–G120, and L125–N145.

The protein resides in the membrane. The sequence is that of Transmembrane protein 220 (TMEM220) from Homo sapiens (Human).